Here is a 309-residue protein sequence, read N- to C-terminus: Wall-associated proteinase (309 aa).

Residues N190 and N295 are each glycosylated (N-linked (GlcNAc...) asparagine).

It is found in the secreted. Its subcellular location is the cell wall. The protein localises to the membrane. Its function is as follows. May participate in wall plasticization and/or intussusception or in cell wall turnover. This chain is Wall-associated proteinase, found in Coccidioides immitis (strain RS) (Valley fever fungus).